Consider the following 953-residue polypeptide: Dual serine/threonine and tyrosine protein kinase (953 aa).

Residues 665 to 926 form the Protein kinase domain; that stretch reads PKLEREIGRG…VQSKLQDIYT (262 aa). Residues 671–679 and lysine 694 contribute to the ATP site; that span reads IGRGQYGVV. Residue aspartate 791 is the Proton acceptor of the active site. The tract at residues 932–953 is disordered; it reads REAEGGGGGGAKEQQNLKSDTL.

Belongs to the protein kinase superfamily. Ser/Thr protein kinase family.

Its subcellular location is the cytoplasm. The protein localises to the cell membrane. It is found in the apical cell membrane. The protein resides in the basolateral cell membrane. It localises to the cell junction. It carries out the reaction L-seryl-[protein] + ATP = O-phospho-L-seryl-[protein] + ADP + H(+). The catalysed reaction is L-threonyl-[protein] + ATP = O-phospho-L-threonyl-[protein] + ADP + H(+). The enzyme catalyses L-tyrosyl-[protein] + ATP = O-phospho-L-tyrosyl-[protein] + ADP + H(+). Its function is as follows. May act as a positive regulator of ERK phosphorylation downstream of fibroblast growth factor-receptor activation. May induce both caspase-dependent apoptosis and caspase-independent cell death. May play a role in the embryonic development. This Strongylocentrotus purpuratus (Purple sea urchin) protein is Dual serine/threonine and tyrosine protein kinase.